The primary structure comprises 150 residues: uncharacterized protein (150 aa).

It is found in the plastid. The protein resides in the chloroplast. This is an uncharacterized protein from Pyropia yezoensis (Susabi-nori).